We begin with the raw amino-acid sequence, 132 residues long: Phosphoribosyl-AMP cyclohydrolase (132 aa).

Mg(2+) is bound at residue Asp82. Cys83 serves as a coordination point for Zn(2+). Mg(2+)-binding residues include Asp84 and Asp86. The Zn(2+) site is built by Cys99 and Cys106.

This sequence belongs to the PRA-CH family. As to quaternary structure, homodimer. It depends on Mg(2+) as a cofactor. Requires Zn(2+) as cofactor.

It localises to the cytoplasm. It catalyses the reaction 1-(5-phospho-beta-D-ribosyl)-5'-AMP + H2O = 1-(5-phospho-beta-D-ribosyl)-5-[(5-phospho-beta-D-ribosylamino)methylideneamino]imidazole-4-carboxamide. Its pathway is amino-acid biosynthesis; L-histidine biosynthesis; L-histidine from 5-phospho-alpha-D-ribose 1-diphosphate: step 3/9. In terms of biological role, catalyzes the hydrolysis of the adenine ring of phosphoribosyl-AMP. This is Phosphoribosyl-AMP cyclohydrolase from Paramagnetospirillum magneticum (strain ATCC 700264 / AMB-1) (Magnetospirillum magneticum).